Reading from the N-terminus, the 512-residue chain is Transactivator/viroplasmin protein (512 aa).

Disordered stretches follow at residues 76-123 (GNER…NPVA) and 474-512 (ADSS…IPSI). Positions 476-487 (SSSTSGEQNNVE) are enriched in polar residues. A compositionally biased stretch (basic and acidic residues) spans 499 to 512 (YDERSDDHKRIPSI).

The protein belongs to the caulimoviridae viroplasmin family.

It is found in the host cytoplasm. Enhances the translation of downstream ORFs on polycistronic mRNAs derived from figwort mosaic virus. This Figwort mosaic virus (strain DxS) (FMV) protein is Transactivator/viroplasmin protein.